A 395-amino-acid polypeptide reads, in one-letter code: Transcriptional coactivator yorkie (395 aa).

Residues Asn-73 to Ser-100 form a disordered region. A phosphoserine mark is found at Ser-82, Ser-88, Ser-100, Ser-117, and Ser-145. Residues Ser-84–Ser-100 are compositionally biased toward polar residues. Disordered regions lie at residues Pro-129–Leu-150 and Ala-162–Ser-199. The residue at position 146 (Ser-146) is a Phosphoserine; by CDK7. Ser-149 is modified (phosphoserine). Residues Ala-162–Ala-179 are compositionally biased toward low complexity. Ser-227 is modified (phosphoserine). Tyr-228 carries the post-translational modification Phosphotyrosine. Ser-232 is subject to Phosphoserine. 2 consecutive WW domains span residues Gly-241 to Ile-274 and Gly-310 to Met-343.

Belongs to the YAP1 family. As to quaternary structure, interacts (via WW domains) with wts. Interacts (via N-terminus) with sd (via C-terminus) and this interaction enhances the transcriptional activity of sd. The phosphorylated form interacts with 14-3-3epsilon and 14-3-3zeta. Interacts with Ack and ex. In terms of processing, its activity is regulated by multiple phosphorylation events. Phosphorylation at Ser-88, Ser-145 and Ser-227 negatively regulate its activity and restrict its nuclear localization. Wts-mediated phosphorylation at Ser-145 promotes interaction with 14-3-3epsilon and 14-3-3zeta. Phosphorylation at Ser-88 and Ser-227 regulate nuclear localization and activity independent of 14-3-3 association. Phosphorylation at Ser-146 by Cdk7 promotes its stability by preventing ubiquitination by the DCX(DCAF12) complex. Post-translationally, ubiquitinated by the DCX(DCAF12) complex, leading to its degradation. Phosphorylation at Ser-146 by Cdk7 prevents ubiquitination by the DCX(DCAF12) complex.

The protein resides in the cytoplasm. It localises to the nucleus. Transcriptional coactivator which is the critical downstream regulatory target in the Hippo/SWH (Sav/Wts/Hpo) signaling pathway that plays a pivotal role in organ size control and tumor suppression by restricting proliferation and promoting apoptosis. The core of this pathway is composed of a kinase cascade wherein Hippo (Hpo), in complex with its regulatory protein Salvador (Sav), phosphorylates and activates Warts (Wts) in complex with its regulatory protein Mats, which in turn phosphorylates and inactivates the Yorkie (Yki) oncoprotein. The Hippo/SWH signaling pathway inhibits the activity of the transcriptional complex formed by Scalloped (sd) and Yki and the target genes of this pathway include cyclin-E (cycE), diap1 and bantam. Regulates the expression of G1/S-specific CycE and diap1, thereby promoting cell proliferation and inhibiting apoptosis. Required for transcriptional activity of sd in wing imaginal disks. Induces expression of expression of vestigial (vg) in wing and haltere disks and the expression of transcription factor E2f (E2f). The protein is Transcriptional coactivator yorkie (yki) of Drosophila melanogaster (Fruit fly).